The following is a 32-amino-acid chain: Defensin-3 (32 aa).

Disulfide bonds link Cys3–Cys31, Cys5–Cys20, and Cys10–Cys30.

The protein resides in the secreted. Its function is as follows. Has antibacterial activity against the Gram-negative bacterium E.coli and the Gram-positive bacteria L.monocytogenes and S.aureus. Has antifungal activity against C.albicans. This Papio hamadryas (Hamadryas baboon) protein is Defensin-3.